Here is a 78-residue protein sequence, read N- to C-terminus: Large ribosomal subunit protein bL28 (78 aa).

This sequence belongs to the bacterial ribosomal protein bL28 family.

In Prochlorococcus marinus (strain MIT 9301), this protein is Large ribosomal subunit protein bL28.